Reading from the N-terminus, the 465-residue chain is Gamma-aminobutyric acid receptor subunit rho-2 (465 aa).

A signal peptide spans 1–20 (MPYLMRLALVLFCLMALVES). Over 21–260 (RKPRRKRWTG…LYINFTLRRH (240 aa)) the chain is Extracellular. Position 105 (arginine 105) interacts with 4-aminobutanoate. Asparagine 120 carries N-linked (GlcNAc...) asparagine glycosylation. Position 169 (serine 169) interacts with 4-aminobutanoate. Cysteine 178 and cysteine 192 are disulfide-bonded. A 4-aminobutanoate-binding site is contributed by glutamate 197. N-linked (GlcNAc...) asparagine glycosylation occurs at asparagine 254. Residues 261–281 (IFFFLLQTYFPATLMVMLSWV) traverse the membrane as a helical segment. Residues 282–293 (SFWIDHRAVPAR) lie on the Cytoplasmic side of the membrane. Residues 294–314 (VSLGIMTVLTMSTIITGVNAS) traverse the membrane as a helical segment. Over 315-325 (MPRVSYIRAVD) the chain is Extracellular. A helical transmembrane segment spans residues 326–346 (IYLWVSFVFVFLSVLEYAAVN). Residues 347-443 (YLTTLQEQKE…IFQNTHAIDK (97 aa)) lie on the Cytoplasmic side of the membrane. Residues 444–464 (YSRLIFPAFYIVFNLIYWSVF) form a helical membrane-spanning segment. Position 465 (serine 465) is a topological domain, extracellular.

The protein belongs to the ligand-gated ion channel (TC 1.A.9) family. Gamma-aminobutyric acid receptor (TC 1.A.9.5) subfamily. GABRR2 sub-subfamily. In terms of assembly, three rho subunits (rho-1/GBRR1, rho-2/GBRR2 and rho-3/GBRR3) coassemble either to form functional homopentamers or heteropentamers. Rho-2 is unable to form a functional homopentamer. Interacts with SQSTM1. In terms of tissue distribution, expressed in the cerebellum.

It is found in the postsynaptic cell membrane. Its subcellular location is the cell membrane. It catalyses the reaction chloride(in) = chloride(out). Rho subunit of the pentameric ligand-gated chloride channels responsible for mediating the effects of gamma-aminobutyric acid (GABA), the major inhibitory neurotransmitter in the brain. Rho-containing GABA-gated chloride channels are a subclass of GABA(A) receptors (GABAARs) entirely composed of rho subunits, where GABA molecules bind at the rho intersubunit interfaces. When activated by GABA, rho-GABAARs selectively allow the flow of chloride anions across the cell membrane down their electrochemical gradient. Rho-2 GABAARs may contribute to the regulation of glial development in the cerebellum by controlling extrasynaptic transmission. Rho-2 GABAARs are also involved in neuronal tonic (extrasynaptic) and phasic (synaptic) transmission in the Purkinje neurons of the cerebellum. Rho-2 GABAARs expressed in retina may play a role in retinal neurotransmission. The protein is Gamma-aminobutyric acid receptor subunit rho-2 of Mus musculus (Mouse).